A 367-amino-acid polypeptide reads, in one-letter code: Forkhead box protein I1-B (367 aa).

2 disordered regions span residues 1–21 and 213–274; these read MNPV…HLPH and DNGN…PPTV. The segment at residues 128–222 is a DNA-binding region (fork-head); sequence RPPYSYSALI…DNGNFRRKRK (95 aa). Positions 233–246 are enriched in basic and acidic residues; it reads AKRDEDHLNPKGKE. Over residues 252–274 the composition is skewed to polar residues; the sequence is TPSSSPEVLSPTGHSKSPSPPTV.

In terms of tissue distribution, initially localized to the animal hemisphere (the presumptive ectoderm) of early-mid blastula embryos. Becomes restricted to head placodes, excluding the otic placodes, by the tailbud stages.

Its subcellular location is the nucleus. In terms of biological role, transcription factor. Essential for ventral specification of the early cephalic (head) ectoderm during gastrulation, playing a role in the 'non-neural' versus 'neural' cell fate choice. Binds to DNA via the target sequence 5'-[AG]TAAA[CT]A-3', with 5'-ATAAACA-3' being the preferred binding site. This chain is Forkhead box protein I1-B (foxi1-b), found in Xenopus laevis (African clawed frog).